The chain runs to 338 residues: S-adenosylmethionine:tRNA ribosyltransferase-isomerase (338 aa).

This sequence belongs to the QueA family. Monomer.

Its subcellular location is the cytoplasm. The enzyme catalyses 7-aminomethyl-7-carbaguanosine(34) in tRNA + S-adenosyl-L-methionine = epoxyqueuosine(34) in tRNA + adenine + L-methionine + 2 H(+). Its pathway is tRNA modification; tRNA-queuosine biosynthesis. In terms of biological role, transfers and isomerizes the ribose moiety from AdoMet to the 7-aminomethyl group of 7-deazaguanine (preQ1-tRNA) to give epoxyqueuosine (oQ-tRNA). The polypeptide is S-adenosylmethionine:tRNA ribosyltransferase-isomerase (Francisella tularensis subsp. tularensis (strain WY96-3418)).